Here is a 591-residue protein sequence, read N- to C-terminus: Aspartate--tRNA ligase (591 aa).

Residue glutamate 173 participates in L-aspartate binding. The aspartate stretch occupies residues 197-200 (QLFK). Position 219 (arginine 219) interacts with L-aspartate. Residues 219–221 (RDE) and glutamine 228 contribute to the ATP site. Histidine 448 contacts L-aspartate. Residue glutamate 482 participates in ATP binding. An L-aspartate-binding site is contributed by arginine 489. Residue 534 to 537 (GLDR) coordinates ATP.

This sequence belongs to the class-II aminoacyl-tRNA synthetase family. Type 1 subfamily. In terms of assembly, homodimer.

Its subcellular location is the cytoplasm. The catalysed reaction is tRNA(Asp) + L-aspartate + ATP = L-aspartyl-tRNA(Asp) + AMP + diphosphate. In terms of biological role, catalyzes the attachment of L-aspartate to tRNA(Asp) in a two-step reaction: L-aspartate is first activated by ATP to form Asp-AMP and then transferred to the acceptor end of tRNA(Asp). The polypeptide is Aspartate--tRNA ligase (Shewanella oneidensis (strain ATCC 700550 / JCM 31522 / CIP 106686 / LMG 19005 / NCIMB 14063 / MR-1)).